A 639-amino-acid chain; its full sequence is UvrABC system protein C (639 aa).

The region spanning 20–97 is the GIY-YIG domain; the sequence is ERSGVYRMFD…IKKFQPKFNI (78 aa). Residues 207–242 form the UVR domain; the sequence is KELQENLSRKMEELSSQMRFEEAAEIRDRIKALSYV.

Belongs to the UvrC family. Interacts with UvrB in an incision complex.

The protein resides in the cytoplasm. The UvrABC repair system catalyzes the recognition and processing of DNA lesions. UvrC both incises the 5' and 3' sides of the lesion. The N-terminal half is responsible for the 3' incision and the C-terminal half is responsible for the 5' incision. The polypeptide is UvrABC system protein C (Rickettsia peacockii (strain Rustic)).